Consider the following 215-residue polypeptide: Small ribosomal subunit protein uS3c (215 aa).

The KH type-2 domain occupies 43-116; that stretch reads IKNYIKKNMK…KLNMAITRIA (74 aa).

The protein belongs to the universal ribosomal protein uS3 family. Part of the 30S ribosomal subunit.

It is found in the plastid. Its subcellular location is the chloroplast. This is Small ribosomal subunit protein uS3c (rps3) from Morus indica (Mulberry).